Here is a 738-residue protein sequence, read N- to C-terminus: Dipeptidyl peptidase 3 (738 aa).

A2 carries the N-acetylalanine modification. H450 is a binding site for Zn(2+). Residue E451 is part of the active site. H455 and E508 together coordinate Zn(2+).

The protein belongs to the peptidase M49 family. Requires Zn(2+) as cofactor.

It is found in the cytoplasm. Its subcellular location is the cytosol. The catalysed reaction is Release of an N-terminal dipeptide from a peptide comprising four or more residues, with broad specificity. Also acts on dipeptidyl 2-naphthylamides.. In terms of biological role, cleaves and degrades bioactive peptides, including angiotensin, Leu-enkephalin and Met-enkephalin. Also cleaves Arg-Arg-beta-naphthylamide (in vitro). The protein is Dipeptidyl peptidase 3 (Dpp3) of Mus musculus (Mouse).